The primary structure comprises 619 residues: Dihydroxy-acid dehydratase (619 aa).

A Mg(2+)-binding site is contributed by Asp-81. Cys-122 is a [2Fe-2S] cluster binding site. Residues Asp-123 and Lys-124 each coordinate Mg(2+). Residue Lys-124 is modified to N6-carboxylysine. Cys-195 contacts [2Fe-2S] cluster. Glu-491 contacts Mg(2+). Ser-517 (proton acceptor) is an active-site residue.

The protein belongs to the IlvD/Edd family. As to quaternary structure, homodimer. Requires [2Fe-2S] cluster as cofactor. Mg(2+) is required as a cofactor.

It carries out the reaction (2R)-2,3-dihydroxy-3-methylbutanoate = 3-methyl-2-oxobutanoate + H2O. The enzyme catalyses (2R,3R)-2,3-dihydroxy-3-methylpentanoate = (S)-3-methyl-2-oxopentanoate + H2O. It functions in the pathway amino-acid biosynthesis; L-isoleucine biosynthesis; L-isoleucine from 2-oxobutanoate: step 3/4. Its pathway is amino-acid biosynthesis; L-valine biosynthesis; L-valine from pyruvate: step 3/4. In terms of biological role, functions in the biosynthesis of branched-chain amino acids. Catalyzes the dehydration of (2R,3R)-2,3-dihydroxy-3-methylpentanoate (2,3-dihydroxy-3-methylvalerate) into 2-oxo-3-methylpentanoate (2-oxo-3-methylvalerate) and of (2R)-2,3-dihydroxy-3-methylbutanoate (2,3-dihydroxyisovalerate) into 2-oxo-3-methylbutanoate (2-oxoisovalerate), the penultimate precursor to L-isoleucine and L-valine, respectively. This Sphingopyxis alaskensis (strain DSM 13593 / LMG 18877 / RB2256) (Sphingomonas alaskensis) protein is Dihydroxy-acid dehydratase.